Consider the following 203-residue polypeptide: Outer-membrane lipoprotein carrier protein (203 aa).

The N-terminal stretch at 1 to 20 is a signal peptide; sequence MKKWLAISCLIAGMTSTAVY.

The protein belongs to the LolA family. In terms of assembly, monomer.

The protein localises to the periplasm. Participates in the translocation of lipoproteins from the inner membrane to the outer membrane. Only forms a complex with a lipoprotein if the residue after the N-terminal Cys is not an aspartate (The Asp acts as a targeting signal to indicate that the lipoprotein should stay in the inner membrane). The chain is Outer-membrane lipoprotein carrier protein from Pectobacterium carotovorum subsp. carotovorum (strain PC1).